The primary structure comprises 310 residues: Serine protease 30 (310 aa).

A signal peptide spans 1–21 (MESRARCIFLLLLQILTRARG). Positions 22–36 (DILPSVCGHSRDAGK) are cleaved as a propeptide — activation peptide. The region spanning 37-277 (IVGGQDALEG…YVDWIQRILA (241 aa)) is the Peptidase S1 domain. A disulfide bridge links Cys-63 with Cys-79. Residues His-78 and Asp-128 each act as charge relay system in the active site. Intrachain disulfides connect Cys-161–Cys-235, Cys-191–Cys-214, and Cys-225–Cys-253. Ser-229 serves as the catalytic Charge relay system. 2 N-linked (GlcNAc...) asparagine glycosylation sites follow: Asn-238 and Asn-279. A lipid anchor (GPI-anchor amidated serine) is attached at Ser-281. Residues 282-310 (DAYGYHSSASAAYQMLLPVLLAVALPGSL) constitute a propeptide, removed in mature form.

The protein belongs to the peptidase S1 family. As to expression, expressed primarily in distal gut.

It is found in the cell membrane. Inhibited by aprotinin, leupeptin, benzamidine and soybean trypsin inhibitor. Partially inhibited by PMSF and DFP. Its function is as follows. Selectively cleaves synthetic peptide substrates of trypsin. Activates the epithelial sodium channel ENaC. This is Serine protease 30 (Prss30) from Mus musculus (Mouse).